The primary structure comprises 654 residues: Import motor subunit, mitochondrial (654 aa).

A mitochondrion-targeting transit peptide spans 1-23 (MLAAKNILNRSSLSSSFRIATRL). Phosphothreonine is present on T330. Residues 629–654 (EQLYKNDSNNNNNNNGNNAESGETKQ) are disordered. Residues 637-646 (NNNNNNNGNN) are compositionally biased toward low complexity.

The protein belongs to the heat shock protein 70 family. As to quaternary structure, component of the PAM complex, at least composed of SSC1 (mtHsp70), MGE1, TIM44, PAM16/TIM16, PAM17 and PAM18/TIM14. In the complex, SSC1 interacts directly with PAM18 and TIM44. Interacts with NAP1.

The protein localises to the mitochondrion matrix. It catalyses the reaction ATP + H2O = ADP + phosphate + H(+). Its function is as follows. Essential component of the PAM complex, a complex required for the translocation of transit peptide-containing proteins from the inner membrane into the mitochondrial matrix in an ATP-dependent manner. Constitutes the ATP-driven core of the motor and binds the precursor preprotein. Required for the import of the processed frataxin homolog YFH1 into the mitochondrion. The chain is Import motor subunit, mitochondrial from Saccharomyces cerevisiae (strain ATCC 204508 / S288c) (Baker's yeast).